Reading from the N-terminus, the 117-residue chain is Transcription elongation factor A protein-like 8 (117 aa).

Composition is skewed to basic and acidic residues over residues 1–24 (MQKSCGENERKPQNMPKAEEDRPL) and 61–74 (YKEDSPVRHLDPEE). The tract at residues 1–74 (MQKSCGENER…SPVRHLDPEE (74 aa)) is disordered. Residues 73–100 (EEMIRGADELERLREEIRRVRNKFVMMH) are a coiled coil.

Belongs to the TFS-II family. TFA subfamily.

It localises to the nucleus. Its function is as follows. May be involved in transcriptional regulation. This is Transcription elongation factor A protein-like 8 (TCEAL8) from Bos taurus (Bovine).